Here is a 406-residue protein sequence, read N- to C-terminus: MAAAVRQDLAQLMNSSGSHKDLAGKYRQILEKAIQLSGAEQLEALKAFVEAMVNENVSLVISRQLLTDFCTHLPNLPDSTAKEIYHFTLEKIQPRVISFEEQVASIRQHLASIYEKEEDWRNAAQVLVGIPLETGQKQYNVDYKLETYLKIARLYLEDDDPVQAEAYINRASLLQNESTNEQLQIHYKVCYARVLDYRRKFIEAAQRYNELSYKTIVHESERLEALKHALHCTILASAGQQRSRMLATLFKDERCQQLAAYGILEKMYLDRIIRGNQLQEFAAMLMPHQKATTADGSSILDRAVIEHNLLSASKLYNNITFEELGALLEIPAAKAEKIASQMITEGRMNGFIDQIDGIVHFETREALPTWDKQIQSLCFQVNNLLEKISQTAPEWTAQAMEAQMAQ.

Ala2 carries the post-translational modification N-acetylalanine. Lys25 carries the N6-acetyllysine modification. The 170-residue stretch at 197–366 (YRRKFIEAAQ…GIVHFETREA (170 aa)) folds into the PCI domain.

It belongs to the CSN4 family. Component of the CSN complex, composed of COPS1/GPS1, COPS2, COPS3, COPS4, COPS5, COPS6, COPS7 (COPS7A or COPS7B), COPS8 and COPS9 isoform 1. In the complex, it probably interacts directly with COPS1, COPS2, COPS3, COPS5, COPS6, COPS7 (COPS7A or COPS7B) and COPS8. Interacts with TOR1A; the interaction is direct and associates TOR1A and SNAPIN with the CSN complex. Interacts with STON2; controls STON2 neddylation levels. Interacts with ERCC6.

Its subcellular location is the cytoplasm. It is found in the nucleus. It localises to the cytoplasmic vesicle. The protein resides in the secretory vesicle. The protein localises to the synaptic vesicle. In terms of biological role, component of the COP9 signalosome complex (CSN), a complex involved in various cellular and developmental processes. The CSN complex is an essential regulator of the ubiquitin (Ubl) conjugation pathway by mediating the deneddylation of the cullin subunits of SCF-type E3 ligase complexes, leading to decrease the Ubl ligase activity of SCF-type complexes such as SCF, CSA or DDB2. Also involved in the deneddylation of non-cullin subunits such as STON2. The complex is also involved in phosphorylation of p53/TP53, c-jun/JUN, IkappaBalpha/NFKBIA, ITPK1, IRF8/ICSBP and SNAPIN, possibly via its association with CK2 and PKD kinases. CSN-dependent phosphorylation of TP53 and JUN promotes and protects degradation by the Ubl system, respectively. The protein is COP9 signalosome complex subunit 4 (COPS4) of Homo sapiens (Human).